A 368-amino-acid polypeptide reads, in one-letter code: Peptide chain release factor 2 (368 aa).

Residue glutamine 250 is modified to N5-methylglutamine.

It belongs to the prokaryotic/mitochondrial release factor family. In terms of processing, methylated by PrmC. Methylation increases the termination efficiency of RF2.

The protein resides in the cytoplasm. Its function is as follows. Peptide chain release factor 2 directs the termination of translation in response to the peptide chain termination codons UGA and UAA. The protein is Peptide chain release factor 2 of Rickettsia felis (strain ATCC VR-1525 / URRWXCal2) (Rickettsia azadi).